A 200-amino-acid chain; its full sequence is Inner membrane-spanning protein YciB (200 aa).

The next 6 helical transmembrane spans lie at M1 to N21, I37 to A57, L66 to W86, L103 to F123, K136 to W156, and F167 to I187.

This sequence belongs to the YciB family.

It localises to the cell inner membrane. In terms of biological role, plays a role in cell envelope biogenesis, maintenance of cell envelope integrity and membrane homeostasis. The sequence is that of Inner membrane-spanning protein YciB from Brucella melitensis biotype 1 (strain ATCC 23456 / CCUG 17765 / NCTC 10094 / 16M).